Here is a 241-residue protein sequence, read N- to C-terminus: Corrinoid adenosyltransferase MMAB (241 aa).

A mitochondrion-targeting transit peptide spans 1 to 26 (MAVWGPGGRLGLRGCLGARKLLCPRF). Residues 27–69 (QSRGPQGVEDGDRPQPSSKTPKVPKIYTKTGDKGFSSTFTGER) are disordered. ATP-binding positions include 54 to 63 (TKTGDKGFSS) and Lys72. Ser128 carries the phosphoserine modification. ATP is bound at residue 184 to 188 (RRAER). Position 205 is an N6-succinyllysine (Lys205). Asn208 contributes to the ATP binding site. Position 224 is an N6-acetyllysine; alternate (Lys224). The residue at position 224 (Lys224) is an N6-succinyllysine; alternate.

This sequence belongs to the Cob(I)alamin adenosyltransferase family. In terms of assembly, homotrimer.

The protein localises to the mitochondrion. It carries out the reaction cob(I)alamin-[corrinoid adenosyltransferase] + ATP = apo-[corrinoid adenosyltransferase] + adenosylcob(III)alamin + triphosphate. Converts cob(I)alamin to adenosylcobalamin (adenosylcob(III)alamin), a coenzyme for methylmalonyl-CoA mutase, therefore participates in the final step of the vitamin B12 conversion. Generates adenosylcobalamin (AdoCbl) and directly delivers the cofactor to MUT in a transfer that is stimulated by ATP-binding to MMAB and gated by MMAA. This Bos taurus (Bovine) protein is Corrinoid adenosyltransferase MMAB.